The primary structure comprises 107 residues: UPF0145 protein YbjQ (107 aa).

Belongs to the UPF0145 family.

The protein is UPF0145 protein YbjQ of Salmonella dublin (strain CT_02021853).